A 189-amino-acid polypeptide reads, in one-letter code: Elongation factor P (189 aa).

Belongs to the elongation factor P family.

The protein localises to the cytoplasm. It functions in the pathway protein biosynthesis; polypeptide chain elongation. Involved in peptide bond synthesis. Stimulates efficient translation and peptide-bond synthesis on native or reconstituted 70S ribosomes in vitro. Probably functions indirectly by altering the affinity of the ribosome for aminoacyl-tRNA, thus increasing their reactivity as acceptors for peptidyl transferase. The polypeptide is Elongation factor P (Rhizobium meliloti (strain 1021) (Ensifer meliloti)).